A 176-amino-acid chain; its full sequence is MDLPGPIHDFLLVFLGSGLILGSIGVVLFPNPIYSAFSLGLVLVCISLFYILSNSYFVAAAQLLIYVGAINVLILFAVMFLNGSEYSNDFPLWTLGDGITSQVCISLFISLISTILDTSWYGIIWTTRSNQIIEQDLISNSQQIGIHLSTDFFLPFELISIILLVALIGAIVIARQ.

Helical transmembrane passes span 10 to 30 (FLLV…VLFP), 32 to 52 (PIYS…FYIL), 61 to 81 (AQLL…VMFL), 105 to 125 (ISLF…GIIW), and 153 to 173 (FLPF…AIVI).

The protein belongs to the complex I subunit 6 family. NDH is composed of at least 16 different subunits, 5 of which are encoded in the nucleus.

Its subcellular location is the plastid. It localises to the chloroplast thylakoid membrane. It carries out the reaction a plastoquinone + NADH + (n+1) H(+)(in) = a plastoquinol + NAD(+) + n H(+)(out). The enzyme catalyses a plastoquinone + NADPH + (n+1) H(+)(in) = a plastoquinol + NADP(+) + n H(+)(out). Its function is as follows. NDH shuttles electrons from NAD(P)H:plastoquinone, via FMN and iron-sulfur (Fe-S) centers, to quinones in the photosynthetic chain and possibly in a chloroplast respiratory chain. The immediate electron acceptor for the enzyme in this species is believed to be plastoquinone. Couples the redox reaction to proton translocation, and thus conserves the redox energy in a proton gradient. In Ipomoea purpurea (Common morning glory), this protein is NAD(P)H-quinone oxidoreductase subunit 6, chloroplastic (ndhG).